Reading from the N-terminus, the 490-residue chain is Acetyl-coenzyme A carboxylase carboxyl transferase subunit beta, chloroplastic (490 aa).

The region spanning 221–490 is the CoA carboxyltransferase N-terminal domain; the sequence is LWVQCENCYG…PLNQKSSKIK (270 aa). Positions 225, 228, 244, and 247 each coordinate Zn(2+). Residues 225–247 form a C4-type zinc finger; that stretch reads CENCYGLNYKKFLKSKMNICEQC.

The protein belongs to the AccD/PCCB family. In terms of assembly, acetyl-CoA carboxylase is a heterohexamer composed of biotin carboxyl carrier protein, biotin carboxylase and 2 subunits each of ACCase subunit alpha and ACCase plastid-coded subunit beta (accD). Zn(2+) is required as a cofactor. As to expression, expressed in leaves, ripening and mature fruit.

Its subcellular location is the plastid. It is found in the chloroplast stroma. It localises to the chromoplast stroma. The catalysed reaction is N(6)-carboxybiotinyl-L-lysyl-[protein] + acetyl-CoA = N(6)-biotinyl-L-lysyl-[protein] + malonyl-CoA. The protein operates within lipid metabolism; malonyl-CoA biosynthesis; malonyl-CoA from acetyl-CoA: step 1/1. Functionally, component of the acetyl coenzyme A carboxylase (ACC) complex. Biotin carboxylase (BC) catalyzes the carboxylation of biotin on its carrier protein (BCCP) and then the CO(2) group is transferred by the transcarboxylase to acetyl-CoA to form malonyl-CoA. Is up-regulated upon chromoplast differentiation, presumably for fatty acid biosynthesis. The protein is Acetyl-coenzyme A carboxylase carboxyl transferase subunit beta, chloroplastic of Solanum lycopersicum (Tomato).